The primary structure comprises 255 residues: Imidazole glycerol phosphate synthase subunit HisF (255 aa).

Active-site residues include D11 and D130.

It belongs to the HisA/HisF family. Heterodimer of HisH and HisF.

The protein resides in the cytoplasm. The catalysed reaction is 5-[(5-phospho-1-deoxy-D-ribulos-1-ylimino)methylamino]-1-(5-phospho-beta-D-ribosyl)imidazole-4-carboxamide + L-glutamine = D-erythro-1-(imidazol-4-yl)glycerol 3-phosphate + 5-amino-1-(5-phospho-beta-D-ribosyl)imidazole-4-carboxamide + L-glutamate + H(+). Its pathway is amino-acid biosynthesis; L-histidine biosynthesis; L-histidine from 5-phospho-alpha-D-ribose 1-diphosphate: step 5/9. In terms of biological role, IGPS catalyzes the conversion of PRFAR and glutamine to IGP, AICAR and glutamate. The HisF subunit catalyzes the cyclization activity that produces IGP and AICAR from PRFAR using the ammonia provided by the HisH subunit. This is Imidazole glycerol phosphate synthase subunit HisF from Rhodopseudomonas palustris (strain HaA2).